A 133-amino-acid polypeptide reads, in one-letter code: Probable non-specific lipid-transfer protein 2 (133 aa).

Residues 1 to 31 (MRTVSMAALVVIAAALAWTSSAELASAPAPG) form the signal peptide. Disulfide bonds link Cys35-Cys83, Cys45-Cys60, Cys61-Cys106, and Cys81-Cys121.

This sequence belongs to the plant LTP family.

Its function is as follows. Plant non-specific lipid-transfer proteins transfer phospholipids as well as galactolipids across membranes. May play a role in wax or cutin deposition in the cell walls of expanding epidermal cells and certain secretory tissues. The polypeptide is Probable non-specific lipid-transfer protein 2 (Parietaria judaica (Pellitory-of-the-wall)).